A 272-amino-acid chain; its full sequence is tRNA pseudouridine synthase A (272 aa).

Aspartate 52 acts as the Nucleophile in catalysis. Tyrosine 110 lines the substrate pocket.

The protein belongs to the tRNA pseudouridine synthase TruA family. Homodimer.

The enzyme catalyses uridine(38/39/40) in tRNA = pseudouridine(38/39/40) in tRNA. In terms of biological role, formation of pseudouridine at positions 38, 39 and 40 in the anticodon stem and loop of transfer RNAs. This chain is tRNA pseudouridine synthase A, found in Cupriavidus taiwanensis (strain DSM 17343 / BCRC 17206 / CCUG 44338 / CIP 107171 / LMG 19424 / R1) (Ralstonia taiwanensis (strain LMG 19424)).